The sequence spans 160 residues: Transcription antitermination protein NusB (160 aa).

This sequence belongs to the NusB family.

Functionally, involved in transcription antitermination. Required for transcription of ribosomal RNA (rRNA) genes. Binds specifically to the boxA antiterminator sequence of the ribosomal RNA (rrn) operons. The sequence is that of Transcription antitermination protein NusB from Allorhizobium ampelinum (strain ATCC BAA-846 / DSM 112012 / S4) (Agrobacterium vitis (strain S4)).